A 1005-amino-acid polypeptide reads, in one-letter code: Mitogen-activated protein kinase kinase kinase 10 (1005 aa).

One can recognise an SH3 domain in the interval 32–96 (VSNPLWMAVF…PSNYVVSDDK (65 aa)). The 263-residue stretch at 118-380 (LNLDEIIGVG…SCILEQLTTI (263 aa)) folds into the Protein kinase domain. ATP is bound by residues 124 to 132 (IGVGGFGKV) and Lys-145. The active-site Proton acceptor is Asp-242. Leucine-zipper regions lie at residues 404–425 (IQQM…EEEL) and 439–460 (LKRR…ELNI). 4 disordered regions span residues 551–611 (SVLK…KHTP), 647–676 (QSDH…QSRR), 712–736 (FQWA…GEDS), and 758–940 (RSLI…AEGA). Basic and acidic residues-rich tracts occupy residues 576-588 (QKER…RLKT) and 648-658 (SDHRSHPEDTA). Composition is skewed to basic and acidic residues over residues 761–786 (IRSD…EDRG) and 799–809 (YKVESFKRDPK). Over residues 810–826 (QSLTPTHVTVGRNNTTE) the composition is skewed to polar residues. Pro residues predominate over residues 862–879 (EPSPFPRLPDPHFVFPPP). Residues 915 to 940 (SLSQTHSSSPSSGGGDACSSGSAEGA) show a composition bias toward low complexity.

It belongs to the protein kinase superfamily. STE Ser/Thr protein kinase family. MAP kinase kinase kinase subfamily. In terms of assembly, homodimer. Binds to the GTPase rac1 but not cdc42 or rhoA. Interacts (via kinase domain) with pak1 (via kinase domain). Interacts with the ubiquitin-conjugating enzyme ube2d4. The cofactor is Mg(2+). Post-translationally, autophosphorylation on serine and threonine residues within the activation loop plays a role in enzyme activation. In terms of processing, mono- and poly-ubiquitinated. As to expression, in adults, strongly expressed in the brain and spleen with lower levels in pancreas, heart, muscle and kidney (at protein level). In the developing embryo, expressed at stage 22 in the cement gland. Weakly expressed in the pronephros from stage 24 or 25, with expression increasing in strength by stage 30 and continuing at least until stage 37. Expression in the developing pronephros correlates with epithelialization of the proximal pronephric tubules.

The enzyme catalyses L-seryl-[protein] + ATP = O-phospho-L-seryl-[protein] + ADP + H(+). It catalyses the reaction L-threonyl-[protein] + ATP = O-phospho-L-threonyl-[protein] + ADP + H(+). Homodimerization via the leucine zipper domains is required for autophosphorylation and subsequent activation. Activates the JUN N-terminal pathway. Essential for pronephros and cement gland development. This is Mitogen-activated protein kinase kinase kinase 10 (map3k10) from Xenopus laevis (African clawed frog).